The primary structure comprises 272 residues: Insulin-like growth factor-binding protein 1 (272 aa).

The first 25 residues, 1 to 25 (MPEVPAAGLWPFLLLLAVQVSTVAS), serve as a signal peptide directing secretion. Residues 28–109 (QPWHCAPCSA…TRGQGACVPE (82 aa)) form the IGFBP N-terminal domain. 5 disulfide bridges follow: Cys32-Cys59, Cys35-Cys61, Cys43-Cys62, Cys50-Cys65, and Cys73-Cys86. A phosphoserine mark is found at Ser139, Ser157, and Ser169. Residue Thr170 is modified to Phosphothreonine. The residue at position 171 (Tyr171) is a Phosphotyrosine. Positions 186-264 (KQPCRRELYK…SLEIRGDPNC (79 aa)) constitute a Thyroglobulin type-1 domain. Disulfide bonds link Cys189–Cys219, Cys230–Cys241, and Cys243–Cys264. A Phosphoserine modification is found at Ser255. The short motif at 259 to 261 (RGD) is the Cell attachment site element.

In terms of assembly, binds equally well IGF1 and IGF2. Interacts with integrin ITGA5:ITGB1. Interacts with VHL; this interaction inhibits HIF1A degradation.

It localises to the secreted. Multifunctional protein that plays a critical role in regulating the availability of IGFs such as IGF1 and IGF2 to their receptors and thereby regulates IGF-mediated cellular processes including cell migration, proliferation, differentiation or apoptosis in a cell-type specific manner. Also plays a positive role in cell migration by interacting with integrin ITGA5:ITGB1 through its RGD motif. Mechanistically, binding to integrins leads to activation of focal adhesion kinase/PTK2 and stimulation of the mitogen-activated protein kinase (MAPK) pathway. Regulates cardiomyocyte apoptosis by suppressing HIF-1alpha/HIF1A degradation through ubiquitination. The sequence is that of Insulin-like growth factor-binding protein 1 (IGFBP1) from Ictidomys tridecemlineatus (Thirteen-lined ground squirrel).